The primary structure comprises 970 residues: Toxin subunit YenC2 (970 aa).

RHS repeat units follow at residues 168-182, 297-311, 329-343, 361-375, 408-422, 500-514, 580-594, 606-620, and 640-654; these read AGQC…GLIQ, GVVT…TQRL, LQDL…GNVL, VPEN…YQLV, NYTR…GNLM, DDSE…SQRI, NDQI…TCSS, SMEE…AVWA, and DATG…YYQP. The segment at 610 to 690 is RHS-repeat associated core domain; the sequence is YYPYGGTAVW…PLRLTDPDGM (81 aa). The deaminase domain stretch occupies residues 849-950; the sequence is TEAFITGIRS…YNCSGIISGL (102 aa).

This sequence belongs to the RHS family. Semipurified toxin complex consists of at least YenA1-YenA2-YenB-YenC1-YenC2-Chi1-Chi2. YenB and the N-terminus of YenC2 form a large hollow shell of beta-strands. The shell is closed at both ends, within which the C-terminus of YenC2 is probably found. The C-terminal region dissociates from the YenB-YenC2 complex at pH 4.5 but not 7.5. The Yen-TC:K9 subcomplex is about 26 nm tall and 22 nm in diameter with 5-fold symmetry and 5 copies of YenA1, YenA2, Chi1 and Chi2; the chitinase subunits may be solvent accessible on the exterior the complex. The Yen-TC:K9 subcomplex has no insecticidal activity. The native complex with additional YenB, YenC1 and YenC2 subunits is 16 nm taller and is insecticidal; the toxicity-conferring subunits are present at about 1 copy each.

It is found in the secreted. Its activity is regulated as follows. Toxin complex is secreted when grown at 25 degrees Celsius or less; at higher temperatures the proteins are present intracellularly but not secreted. Part of an orally active toxin complex (TC) with strong insecticidal effects on larvae of the Coleoptera Costelytra zealandica, Acrossidius tasmania and Adoryphorus couloni and some Lepidoptera larvae. The TC has an endochitinase activity. This is Toxin subunit YenC2 from Yersinia entomophaga.